The following is a 228-amino-acid chain: Leucyl/phenylalanyl-tRNA--protein transferase (228 aa).

Belongs to the L/F-transferase family.

Its subcellular location is the cytoplasm. The catalysed reaction is N-terminal L-lysyl-[protein] + L-leucyl-tRNA(Leu) = N-terminal L-leucyl-L-lysyl-[protein] + tRNA(Leu) + H(+). It carries out the reaction N-terminal L-arginyl-[protein] + L-leucyl-tRNA(Leu) = N-terminal L-leucyl-L-arginyl-[protein] + tRNA(Leu) + H(+). The enzyme catalyses L-phenylalanyl-tRNA(Phe) + an N-terminal L-alpha-aminoacyl-[protein] = an N-terminal L-phenylalanyl-L-alpha-aminoacyl-[protein] + tRNA(Phe). Its function is as follows. Functions in the N-end rule pathway of protein degradation where it conjugates Leu, Phe and, less efficiently, Met from aminoacyl-tRNAs to the N-termini of proteins containing an N-terminal arginine or lysine. The chain is Leucyl/phenylalanyl-tRNA--protein transferase from Sulfurimonas denitrificans (strain ATCC 33889 / DSM 1251) (Thiomicrospira denitrificans (strain ATCC 33889 / DSM 1251)).